A 221-amino-acid chain; its full sequence is Crossover junction endodeoxyribonuclease RuvC (221 aa).

Catalysis depends on residues Asp-12, Glu-73, and Asp-146. The Mg(2+) site is built by Asp-12, Glu-73, and Asp-146. The disordered stretch occupies residues 169–221 (SQYSEQELEKRRRVQQGKLGKAKSTYNAEQAQSHASDPAKAAHPSQFQRTDTN). Residues 192–203 (STYNAEQAQSHA) show a composition bias toward polar residues.

This sequence belongs to the RuvC family. As to quaternary structure, homodimer which binds Holliday junction (HJ) DNA. The HJ becomes 2-fold symmetrical on binding to RuvC with unstacked arms; it has a different conformation from HJ DNA in complex with RuvA. In the full resolvosome a probable DNA-RuvA(4)-RuvB(12)-RuvC(2) complex forms which resolves the HJ. Mg(2+) is required as a cofactor.

The protein resides in the cytoplasm. The catalysed reaction is Endonucleolytic cleavage at a junction such as a reciprocal single-stranded crossover between two homologous DNA duplexes (Holliday junction).. Its function is as follows. The RuvA-RuvB-RuvC complex processes Holliday junction (HJ) DNA during genetic recombination and DNA repair. Endonuclease that resolves HJ intermediates. Cleaves cruciform DNA by making single-stranded nicks across the HJ at symmetrical positions within the homologous arms, yielding a 5'-phosphate and a 3'-hydroxyl group; requires a central core of homology in the junction. The consensus cleavage sequence is 5'-(A/T)TT(C/G)-3'. Cleavage occurs on the 3'-side of the TT dinucleotide at the point of strand exchange. HJ branch migration catalyzed by RuvA-RuvB allows RuvC to scan DNA until it finds its consensus sequence, where it cleaves and resolves the cruciform DNA. In Corynebacterium glutamicum (strain ATCC 13032 / DSM 20300 / JCM 1318 / BCRC 11384 / CCUG 27702 / LMG 3730 / NBRC 12168 / NCIMB 10025 / NRRL B-2784 / 534), this protein is Crossover junction endodeoxyribonuclease RuvC.